Consider the following 505-residue polypeptide: Zinc metalloproteinase/disintegrin (505 aa).

The first 20 residues, 1–20 (MIQVLLVIICLAAFPYQGTS), serve as a signal peptide directing secretion. Residues 21–214 (IILESGNVND…PIKKASQSNL (194 aa)) constitute a propeptide that is removed on maturation. 2 repeat units span residues 153–179 (KYED…YEPI) and 180–206 (KYED…YEPI). Positions 220 to 416 (RYIELVIVAD…QKPQCILNKP (197 aa)) constitute a Peptidase M12B domain. Positions 223 and 307 each coordinate Ca(2+). His-356 is a binding site for Zn(2+). The active site involves Glu-357. Positions 360 and 366 each coordinate Zn(2+). 2 cysteine pairs are disulfide-bonded: Cys-371/Cys-395 and Cys-373/Cys-378. Ca(2+) is bound by residues Cys-411 and Asn-414. Positions 417 to 432 (LRTDTVSTPVSGNELL) are excised as a propeptide. Positions 424–505 (TPVSGNELLE…AGCPRNPFHA (82 aa)) constitute a Disintegrin domain. Cystine bridges form between Cys-438-Cys-453, Cys-440-Cys-448, Cys-447-Cys-470, Cys-461-Cys-467, Cys-466-Cys-491, and Cys-479-Cys-498. The Cell attachment site signature appears at 483 to 485 (RGD).

Belongs to the venom metalloproteinase (M12B) family. P-II subfamily. P-IIa sub-subfamily. In terms of assembly, monomer. Zn(2+) is required as a cofactor. In terms of tissue distribution, expressed by the venom gland.

The protein resides in the secreted. In terms of biological role, impairs hemostasis in the envenomed animal. Inhibits platelet aggregation induced by ADP, thrombin, platelet-activating factor and collagen. Acts by inhibiting fibrinogen interaction with platelet receptors GPIIb/GPIIIa (ITGA2B/ITGB3). The chain is Zinc metalloproteinase/disintegrin from Gloydius brevicauda (Korean slamosa snake).